Here is a 1227-residue protein sequence, read N- to C-terminus: MSSKVEQLRAQLNERILVLDGGMGTMIQSYRLNEADFRGERFADWPCDLKGNNDLLVLSKPEVIAAIHNAYFEAGADIIETNTFNSTTIAMADYQMESLSAEINFAAAKLARACADEWTARTPEKPRYVAGVLGPTNRTASISPDVNDPAFRNITFDGLVAAYRESTKALVEGGADLILIETVFDTLNAKAAVFAVKTEFEALGVELPIMISGTITDASGRTLSGQTTEAFYNSLRHAEALTFGLNCALGPDELRQYVQELSRIAECYVTAHPNAGLPNAFGEYDLDADTMAKQIREWAQAGFLNIVGGCCGTTPQHIAAMSRAVEGLAPRKLPEIPVACRLSGLEPLNIGEDSLFVNVGERTNVTGSAKFKRLIKEEKYSEALDVARQQVENGAQIIDINMDEGMLDAEAAMVRFLNLIAGEPDIARVPIMIDSSKWDVIEKGLKCIQGKGIVNSISMKEGVDAFIHHAKLLRRYGAAVVVMAFDEQGQADTRARKIEICRRAYKILTEEVGFPPEDIIFDPNIFAVATGIEEHNNYAQDFIGACEDIKRELPHALISGGVSNVSFSFRGNDPVREAIHAVFLYYAIRNGMDMGIVNAGQLAIYDDLPAELRDAVEDVILNRRDDGTERLLELAEKYRGSKTDDTANAQQAEWRSWEVNKRLEYSLVKGITEFIEQDTEEARQQATRPIEVIEGPLMDGMNVVGDLFGEGKMFLPQVVKSARVMKQAVAYLEPFIEASKEQGKTNGKMVIATVKGDVHDIGKNIVGVVLQCNNYEIVDLGVMVPAEKILRTAKEVNADLIGLSGLITPSLDEMVNVAKEMERQGFTIPLLIGGATTSKAHTAVKIEQNYSGPTVYVQNASRTVGVVAALLSDTQRDDFVARTRKEYETVRIQHGRKKPRTPPVTLEAARDNDFAFDWQAYTPPVAHRLGVQEVEASIETLRNYIDWTPFFMTWSLAGKYPRILEDEVVGVEAQRLFKDANDMLDKLSAEKTLNPRGVVGLFPANRVGDDIEIYRDETRTHVINVSHHLRQQTEKTGFANYCLADFVAPKLSGKADYIGAFAVTGGLEEDALADAFEAQHDDYNKIMVKALADRLAEAFAEYLHERVRKVYWGYAPNENLSNEELIRENYQGIRPAPGYPACPEHTEKATIWELLEVEKHTGMKLTESFAMWPGASVSGWYFSHPDSKYYAVAQIQRDQVEDYARRKGMSVTEVERWLAPNLGYDAD.

A Hcy-binding domain is found at 2-325; it reads SSKVEQLRAQ…QHIAAMSRAV (324 aa). Zn(2+) is bound by residues cysteine 247, cysteine 310, and cysteine 311. The 262-residue stretch at 356–617 folds into the Pterin-binding domain; it reads FVNVGERTNV…LPAELRDAVE (262 aa). The 95-residue stretch at 650 to 744 folds into the B12-binding N-terminal domain; sequence QQAEWRSWEV…FIEASKEQGK (95 aa). Methylcob(III)alamin-binding positions include glutamate 694, 756–760, histidine 759, serine 804, threonine 808, and alanine 860; that span reads GDVHD. A B12-binding domain is found at 746-881; sequence NGKMVIATVK…SDTQRDDFVA (136 aa). In terms of domain architecture, AdoMet activation spans 897–1227; the sequence is KKPRTPPVTL…LAPNLGYDAD (331 aa). S-adenosyl-L-methionine contacts are provided by residues aspartate 946, arginine 1134, and 1189 to 1190; that span reads YY.

The protein belongs to the vitamin-B12 dependent methionine synthase family. Methylcob(III)alamin serves as cofactor. Requires Zn(2+) as cofactor.

It catalyses the reaction (6S)-5-methyl-5,6,7,8-tetrahydrofolate + L-homocysteine = (6S)-5,6,7,8-tetrahydrofolate + L-methionine. The protein operates within amino-acid biosynthesis; L-methionine biosynthesis via de novo pathway; L-methionine from L-homocysteine (MetH route): step 1/1. In terms of biological role, catalyzes the transfer of a methyl group from methyl-cobalamin to homocysteine, yielding enzyme-bound cob(I)alamin and methionine. Subsequently, remethylates the cofactor using methyltetrahydrofolate. This Escherichia coli (strain K12) protein is Methionine synthase (metH).